A 310-amino-acid polypeptide reads, in one-letter code: Phosphoribosylaminoimidazole-succinocarboxamide synthase (310 aa).

Belongs to the SAICAR synthetase family.

It carries out the reaction 5-amino-1-(5-phospho-D-ribosyl)imidazole-4-carboxylate + L-aspartate + ATP = (2S)-2-[5-amino-1-(5-phospho-beta-D-ribosyl)imidazole-4-carboxamido]succinate + ADP + phosphate + 2 H(+). It participates in purine metabolism; IMP biosynthesis via de novo pathway; 5-amino-1-(5-phospho-D-ribosyl)imidazole-4-carboxamide from 5-amino-1-(5-phospho-D-ribosyl)imidazole-4-carboxylate: step 1/2. This chain is Phosphoribosylaminoimidazole-succinocarboxamide synthase, found in Stenotrophomonas maltophilia (strain K279a).